A 227-amino-acid chain; its full sequence is Cytidylate kinase (227 aa).

12-20 is an ATP binding site; the sequence is GPSGAGKGT.

It belongs to the cytidylate kinase family. Type 1 subfamily.

The protein resides in the cytoplasm. The catalysed reaction is CMP + ATP = CDP + ADP. It catalyses the reaction dCMP + ATP = dCDP + ADP. This chain is Cytidylate kinase, found in Salmonella paratyphi B (strain ATCC BAA-1250 / SPB7).